We begin with the raw amino-acid sequence, 272 residues long: NH(3)-dependent NAD(+) synthetase (272 aa).

Residue 43-50 (GLSGGQDS) participates in ATP binding. A Mg(2+)-binding site is contributed by aspartate 49. Arginine 138 lines the deamido-NAD(+) pocket. Threonine 158 serves as a coordination point for ATP. Residue glutamate 163 participates in Mg(2+) binding. The deamido-NAD(+) site is built by lysine 171 and aspartate 178. ATP contacts are provided by lysine 187 and threonine 209. 258 to 259 (HK) lines the deamido-NAD(+) pocket.

This sequence belongs to the NAD synthetase family. As to quaternary structure, homodimer.

The catalysed reaction is deamido-NAD(+) + NH4(+) + ATP = AMP + diphosphate + NAD(+) + H(+). The protein operates within cofactor biosynthesis; NAD(+) biosynthesis; NAD(+) from deamido-NAD(+) (ammonia route): step 1/1. In terms of biological role, catalyzes the ATP-dependent amidation of deamido-NAD to form NAD. Uses ammonia as a nitrogen source. The polypeptide is NH(3)-dependent NAD(+) synthetase (Halalkalibacterium halodurans (strain ATCC BAA-125 / DSM 18197 / FERM 7344 / JCM 9153 / C-125) (Bacillus halodurans)).